We begin with the raw amino-acid sequence, 387 residues long: Alanine racemase (387 aa).

The active-site Proton acceptor; specific for D-alanine is the Lys-48. Lys-48 carries the N6-(pyridoxal phosphate)lysine modification. Arg-146 contributes to the substrate binding site. Tyr-267 acts as the Proton acceptor; specific for L-alanine in catalysis. Met-315 contacts substrate.

The protein belongs to the alanine racemase family. It depends on pyridoxal 5'-phosphate as a cofactor.

The catalysed reaction is L-alanine = D-alanine. It functions in the pathway amino-acid biosynthesis; D-alanine biosynthesis; D-alanine from L-alanine: step 1/1. Catalyzes the interconversion of L-alanine and D-alanine. May also act on other amino acids. This chain is Alanine racemase (alr), found in Methylacidiphilum infernorum (isolate V4) (Methylokorus infernorum (strain V4)).